The sequence spans 339 residues: MIRVAINGYGRIGRSILRALYESAKRDRIQIVAINELAKPEAMLHLTQYDTTHGRFHTQVKLDNQHMIIGDDAIKLLHEPDPAKLPWKEMDIDIVFEATGVINDRLECEAHIQAGAKQVLISHPSSSDVDATIVFGVNQDLLKAEHTVVSNASCTTNCIVPVIDVLDRHFEVKSGAITTIHSAMNDQQVIDAYHDDLRRTRAAGQSIIPVDTKLARGIERILPHMKDKFEAISVRVPTINVTAIDLSVTLNKRVDIETVNQVLKQATEGSFSGVVGFTNEPLVSCDFNHDPRSSIVDGTQTRVSDGHLVKLLLWCDNEWGFANRMLDTSLEMIKAKSRT.

11-12 (RI) serves as a coordination point for NAD(+). Residues 153 to 155 (SCT), R199, 212 to 213 (TK), and R235 contribute to the substrate site. C154 functions as the Nucleophile in the catalytic mechanism. An NAD(+)-binding site is contributed by N317.

The protein belongs to the glyceraldehyde-3-phosphate dehydrogenase family. Epd subfamily. As to quaternary structure, homotetramer.

Its subcellular location is the cytoplasm. The catalysed reaction is D-erythrose 4-phosphate + NAD(+) + H2O = 4-phospho-D-erythronate + NADH + 2 H(+). Its pathway is cofactor biosynthesis; pyridoxine 5'-phosphate biosynthesis; pyridoxine 5'-phosphate from D-erythrose 4-phosphate: step 1/5. Its function is as follows. Catalyzes the NAD-dependent conversion of D-erythrose 4-phosphate to 4-phosphoerythronate. The sequence is that of D-erythrose-4-phosphate dehydrogenase from Shewanella pealeana (strain ATCC 700345 / ANG-SQ1).